We begin with the raw amino-acid sequence, 258 residues long: Undecaprenyl-diphosphatase (258 aa).

The next 8 helical transmembrane spans lie at 1 to 21 (MSII…FLPV), 42 to 62 (LKCF…FTFF), 71 to 91 (LWIK…LLYS), 96 to 116 (LFSQ…FIVV), 134 to 154 (GISY…MVPG), 173 to 193 (QTAA…ATFY), 211 to 231 (LFLL…KMFL), and 237 to 257 (FDYI…MFFV).

Belongs to the UppP family.

Its subcellular location is the cell inner membrane. The enzyme catalyses di-trans,octa-cis-undecaprenyl diphosphate + H2O = di-trans,octa-cis-undecaprenyl phosphate + phosphate + H(+). Catalyzes the dephosphorylation of undecaprenyl diphosphate (UPP). Confers resistance to bacitracin. The polypeptide is Undecaprenyl-diphosphatase (Campylobacter hominis (strain ATCC BAA-381 / DSM 21671 / CCUG 45161 / LMG 19568 / NCTC 13146 / CH001A)).